A 310-amino-acid chain; its full sequence is Probable deoxyhypusine synthase (310 aa).

K280 acts as the Nucleophile in catalysis.

The protein belongs to the deoxyhypusine synthase family. Requires NAD(+) as cofactor.

It catalyses the reaction [eIF5A protein]-L-lysine + spermidine = [eIF5A protein]-deoxyhypusine + propane-1,3-diamine. The protein operates within protein modification; eIF5A hypusination. Functionally, catalyzes the NAD-dependent oxidative cleavage of spermidine and the subsequent transfer of the butylamine moiety of spermidine to the epsilon-amino group of a specific lysine residue of the eIF-5A precursor protein to form the intermediate deoxyhypusine residue. In Aeropyrum pernix (strain ATCC 700893 / DSM 11879 / JCM 9820 / NBRC 100138 / K1), this protein is Probable deoxyhypusine synthase (dys).